Reading from the N-terminus, the 62-residue chain is Photosystem II reaction center protein Z (62 aa).

The next 2 membrane-spanning stretches (helical) occupy residues 8 to 28 and 41 to 61; these read ALISLVLVSFVLVVGVPVAYA and WLGSGVWIALVLLVGLLNFFV.

The protein belongs to the PsbZ family. PSII is composed of 1 copy each of membrane proteins PsbA, PsbB, PsbC, PsbD, PsbE, PsbF, PsbH, PsbI, PsbJ, PsbK, PsbL, PsbM, PsbT, PsbX, PsbY, PsbZ, Psb30/Ycf12, peripheral proteins PsbO, CyanoQ (PsbQ), PsbU, PsbV and a large number of cofactors. It forms dimeric complexes.

It is found in the cellular thylakoid membrane. Functionally, may control the interaction of photosystem II (PSII) cores with the light-harvesting antenna, regulates electron flow through the 2 photosystem reaction centers. PSII is a light-driven water plastoquinone oxidoreductase, using light energy to abstract electrons from H(2)O, generating a proton gradient subsequently used for ATP formation. The chain is Photosystem II reaction center protein Z from Trichormus variabilis (strain ATCC 29413 / PCC 7937) (Anabaena variabilis).